Here is a 778-residue protein sequence, read N- to C-terminus: Ubiquitin thioesterase trabid (778 aa).

2 RanBP2-type zinc fingers span residues 5–36 (KDDAQKWKCETCTYENYPSSLKCTMCQASKPL) and 89–118 (DSEKWPCKVCTYLNWPRSLRCVQCCTKRGG). Over residues 187 to 197 (ASHNQSQSQHR) the composition is skewed to polar residues. A disordered region spans residues 187–226 (ASHNQSQSQHRQPVLQQQMQLQLQPQQQRESSSSAAVPPQ). Over residues 198–226 (QPVLQQQMQLQLQPQQQRESSSSAAVPPQ) the composition is skewed to low complexity. A RanBP2-type 3 zinc finger spans residues 232–261 (YVSKWACNSCTYENWPRSIKCSMCGKTRER). The tract at residues 265-290 (GSQNDLHASSSLNSQEENQQQLQQPN) is disordered. Low complexity predominate over residues 273–288 (SSSLNSQEENQQQLQQ). One can recognise an OTU domain in the interval 507–665 (MFVLWNRSAG…RGHFSALVPM (159 aa)). The Nucleophile role is filled by C518. The Proton acceptor role is filled by H658. Residues S770, S771, and S775 each carry the phosphoserine modification.

Belongs to the peptidase C64 family. As to quaternary structure, interacts with Apc.

It catalyses the reaction Thiol-dependent hydrolysis of ester, thioester, amide, peptide and isopeptide bonds formed by the C-terminal Gly of ubiquitin (a 76-residue protein attached to proteins as an intracellular targeting signal).. In terms of biological role, positive regulator of the Wnt signaling pathway. Specifically cleaves 'Lys-63'-linked ubiquitin chains. May act by deubiquitinating APC protein, a negative regulator of Wnt-mediated transcription. Required for an efficient wg response, but not for other signaling responses, in the eye. The sequence is that of Ubiquitin thioesterase trabid (trbd) from Drosophila melanogaster (Fruit fly).